Reading from the N-terminus, the 295-residue chain is MPTRANKVETAWSALLAGASETRQEHLAPSPLFILRQTLFCVLAAYLFCGAGMVWNDWIDRDIDANVARTKNRPLASGKVTTAQAFVWMALQVIASCAVLHVMLDGKDVHVIPVMIASMLYPFLKRPTAKKLHIYPQYMLAFTIAWPAIPGRAAICGRDESFGETVRYCLPLCTVVFFWTIYLNTAYSYQDVVDDRKLNVNSFYNIAGRHTHLVLVALVCPILACLPLYLTQFQSTWLWVTWMGVWTAAFAVQLALFDAKQPASGGSLHKSNFVLGIWTIVVCSVELLLKARVSI.

The next 8 membrane-spanning stretches (helical) occupy residues 39-59 (LFCVLAAYLFCGAGMVWNDWI), 84-104 (QAFVWMALQVIASCAVLHVML), 109-124 (VHVIPVMIASMLYPFL), 131-151 (KLHIYPQYMLAFTIAWPAIPG), 168-188 (YCLPLCTVVFFWTIYLNTAYS), 213-233 (LVLVALVCPILACLPLYLTQF), 237-257 (WLWVTWMGVWTAAFAVQLALF), and 271-291 (SNFVLGIWTIVVCSVELLLKA).

The protein belongs to the UbiA prenyltransferase family. Mg(2+) is required as a cofactor.

It localises to the membrane. It functions in the pathway secondary metabolite biosynthesis; terpenoid biosynthesis. Polyprenyl transferase; part of the gene cluster that mediates the biosynthesis of the diterpenoid pyrones subglutinols A and B. The first step of the pathway is the synthesis of the alpha-pyrone moiety by the polyketide synthase dpmaA via condensation of one acetyl-CoA starter unit with 3 malonyl-CoA units and 2 methylations. The alpha-pyrone is then combined with geranylgeranyl pyrophosphate (GGPP) formed by the GGPP synthase dpmaD through the action of the prenyltransferase dpmaC to yield a linear alpha-pyrone diterpenoid. Subsequent steps in the diterpenoid pyrone biosynthetic pathway involve the decalin core formation, which is initiated by the epoxidation of the C10-C11 olefin by the FAD-dependent oxidoreductase dpmaE, and is followed by a cyclization cascade catalyzed by the terpene cyclase dpmaB. The dehydrogenase dpmaF is then involved in tetrahydrofuran (THF) ring formation at the C5 unit to complete the formation of subglutinols A and B. The protein is Polyprenyl transferase dpmaC of Metarhizium anisopliae (Entomophthora anisopliae).